The sequence spans 473 residues: Photosystem II CP43 reaction center protein (473 aa).

Residues 1–14 constitute a propeptide that is removed on maturation; it reads MKTLYSLRRFYPVE. Thr15 is subject to N-acetylthreonine. Residue Thr15 is modified to Phosphothreonine. 5 consecutive transmembrane segments (helical) span residues 69 to 93, 134 to 155, 178 to 200, 255 to 275, and 291 to 312; these read LFEV…PHLA, LLGP…KDRN, KALY…RKIT, KPFA…LSYS, and WFNN…ASQA. Residue Glu367 participates in [CaMn4O5] cluster binding. The chain crosses the membrane as a helical span at residues 447 to 471; that stretch reads RARAAAAGFEKGIDRDFEPVLSMTP.

This sequence belongs to the PsbB/PsbC family. PsbC subfamily. In terms of assembly, PSII is composed of 1 copy each of membrane proteins PsbA, PsbB, PsbC, PsbD, PsbE, PsbF, PsbH, PsbI, PsbJ, PsbK, PsbL, PsbM, PsbT, PsbX, PsbY, PsbZ, Psb30/Ycf12, at least 3 peripheral proteins of the oxygen-evolving complex and a large number of cofactors. It forms dimeric complexes. It depends on Binds multiple chlorophylls and provides some of the ligands for the Ca-4Mn-5O cluster of the oxygen-evolving complex. It may also provide a ligand for a Cl- that is required for oxygen evolution. PSII binds additional chlorophylls, carotenoids and specific lipids. as a cofactor.

It localises to the plastid. It is found in the chloroplast thylakoid membrane. One of the components of the core complex of photosystem II (PSII). It binds chlorophyll and helps catalyze the primary light-induced photochemical processes of PSII. PSII is a light-driven water:plastoquinone oxidoreductase, using light energy to abstract electrons from H(2)O, generating O(2) and a proton gradient subsequently used for ATP formation. The sequence is that of Photosystem II CP43 reaction center protein from Lactuca sativa (Garden lettuce).